Reading from the N-terminus, the 171-residue chain is Protein-export protein SecB (171 aa).

The protein belongs to the SecB family. In terms of assembly, homotetramer, a dimer of dimers. One homotetramer interacts with 1 SecA dimer.

The protein resides in the cytoplasm. Functionally, one of the proteins required for the normal export of preproteins out of the cell cytoplasm. It is a molecular chaperone that binds to a subset of precursor proteins, maintaining them in a translocation-competent state. It also specifically binds to its receptor SecA. This is Protein-export protein SecB from Jannaschia sp. (strain CCS1).